The following is a 572-amino-acid chain: MEYWKHTNHGKDAGNELETSMATHGNKITNKITYILWTIILVLLSIVFIIVLINSIKSEKAHESLLQDVNNEFMEVTEKIQMASDNINDLIQSGVNTRLLTIQSHVQNYIPISLTQQMSDLRKFISEITIRNDNQEVPPQRITHDVGIKPLNPDDFWRCTSGLPSLMKTPKIRLMPGPGLLAMPTTVDGCVRTPSLVINDLIYAYTSNLITRGCQDIGKSYQVLQIGIITVNSDLVPDLNPRISHTFNINDNRKSCSLALLNTDVYQLCSTPKVDERSDYASSGIEDIVLDIVNHDGSISTTRFKNNNISFDQPYAALYPSVGPGIYYKGKIIFLGYGGLEHPINENAICNTTGCPGKTQRDCNQASHSPWFSDRRMVNSIIVVDKGLNSIPKLKVWTISMRQNYWGSEGRLLLLGNKIYIYTRSTSWHSKLQLGIIDITDYSDIRIKWTWHNVLSRPGNNECPWGHSCPDGCITGVYTDAYPLNPTGSIVSSVILDSQKSRVNPVITYSTSTERVNELAIRNKTLSAGYTTTSCITHYNKGYCFHIVEINHKSLDTFQPMLFKTEIPKSCS.

Over 1-31 (MEYWKHTNHGKDAGNELETSMATHGNKITNK) the chain is Intravirion. Residues 32–52 (ITYILWTIILVLLSIVFIIVL) form a helical membrane-spanning segment. Over 53–572 (INSIKSEKAH…FKTEIPKSCS (520 aa)) the chain is Virion surface. Disulfide bonds link Cys190–Cys214 and Cys256–Cys269. An involved in neuraminidase activity region spans residues 252 to 257 (NRKSCS). Residues Asn308 and Asn351 are each glycosylated (N-linked (GlcNAc...) asparagine; by host). Intrachain disulfides connect Cys355–Cys469 and Cys463–Cys473. Asn523 carries an N-linked (GlcNAc...) asparagine; by host glycan. A disulfide bond links Cys535 and Cys544.

It belongs to the paramyxoviruses hemagglutinin-neuraminidase family. As to quaternary structure, homotetramer; composed of disulfide-linked homodimers. Interacts with F protein trimer.

Its subcellular location is the virion membrane. It localises to the host cell membrane. The enzyme catalyses Hydrolysis of alpha-(2-&gt;3)-, alpha-(2-&gt;6)-, alpha-(2-&gt;8)- glycosidic linkages of terminal sialic acid residues in oligosaccharides, glycoproteins, glycolipids, colominic acid and synthetic substrates.. In terms of biological role, attaches the virus to sialic acid-containing cell receptors and thereby initiating infection. Binding of HN protein to the receptor induces a conformational change that allows the F protein to trigger virion/cell membranes fusion. Its function is as follows. Neuraminidase activity ensures the efficient spread of the virus by dissociating the mature virions from the neuraminic acid containing glycoproteins. The polypeptide is Hemagglutinin-neuraminidase (HN) (Human parainfluenza 3 virus (strain Wash/47885/57) (HPIV-3)).